We begin with the raw amino-acid sequence, 160 residues long: MGVTKKPDLNDPVLRAKLAKGMGHNYYGEPAWPNDLLYIFPVVILGTIACNVGLAVLEPSMIGEPADPFATPLEILPEWYFFPVFQILRTVPNKLLGVLLMVSVPAGLLTVPFLENVNKFQNPFRRPVATTVFLIGTAVALWLGIGATLPIDKSLTLGLF.

3 helical membrane passes run 36–56, 95–115, and 131–151; these read LLYI…GLAV, LLGV…PFLE, and TVFL…TLPI.

This sequence belongs to the cytochrome b family. PetD subfamily. The 4 large subunits of the cytochrome b6-f complex are cytochrome b6, subunit IV (17 kDa polypeptide, petD), cytochrome f and the Rieske protein, while the 4 small subunits are petG, petL, petM and petN. The complex functions as a dimer.

It is found in the plastid. It localises to the chloroplast thylakoid membrane. Component of the cytochrome b6-f complex, which mediates electron transfer between photosystem II (PSII) and photosystem I (PSI), cyclic electron flow around PSI, and state transitions. The protein is Cytochrome b6-f complex subunit 4 of Morus indica (Mulberry).